Here is a 502-residue protein sequence, read N- to C-terminus: Probable cytosol aminopeptidase (502 aa).

Lys269 and Asp274 together coordinate Mn(2+). Lys281 is a catalytic residue. Positions 292, 351, and 353 each coordinate Mn(2+). Arg355 is a catalytic residue.

Belongs to the peptidase M17 family. The cofactor is Mn(2+).

The protein resides in the cytoplasm. The catalysed reaction is Release of an N-terminal amino acid, Xaa-|-Yaa-, in which Xaa is preferably Leu, but may be other amino acids including Pro although not Arg or Lys, and Yaa may be Pro. Amino acid amides and methyl esters are also readily hydrolyzed, but rates on arylamides are exceedingly low.. It catalyses the reaction Release of an N-terminal amino acid, preferentially leucine, but not glutamic or aspartic acids.. Functionally, presumably involved in the processing and regular turnover of intracellular proteins. Catalyzes the removal of unsubstituted N-terminal amino acids from various peptides. This is Probable cytosol aminopeptidase from Vibrio parahaemolyticus serotype O3:K6 (strain RIMD 2210633).